The following is a 219-amino-acid chain: N-(5'-phosphoribosyl)anthranilate isomerase (219 aa).

This sequence belongs to the TrpF family.

It catalyses the reaction N-(5-phospho-beta-D-ribosyl)anthranilate = 1-(2-carboxyphenylamino)-1-deoxy-D-ribulose 5-phosphate. The protein operates within amino-acid biosynthesis; L-tryptophan biosynthesis; L-tryptophan from chorismate: step 3/5. This Chloroherpeton thalassium (strain ATCC 35110 / GB-78) protein is N-(5'-phosphoribosyl)anthranilate isomerase.